The primary structure comprises 317 residues: Acetyl-coenzyme A carboxylase carboxyl transferase subunit alpha (317 aa).

Positions 40-293 (LEVRVREAIV…GDVIANALGE (254 aa)) constitute a CoA carboxyltransferase C-terminal domain.

This sequence belongs to the AccA family. In terms of assembly, acetyl-CoA carboxylase is a heterohexamer composed of biotin carboxyl carrier protein (AccB), biotin carboxylase (AccC) and two subunits each of ACCase subunit alpha (AccA) and ACCase subunit beta (AccD).

Its subcellular location is the cytoplasm. It carries out the reaction N(6)-carboxybiotinyl-L-lysyl-[protein] + acetyl-CoA = N(6)-biotinyl-L-lysyl-[protein] + malonyl-CoA. The protein operates within lipid metabolism; malonyl-CoA biosynthesis; malonyl-CoA from acetyl-CoA: step 1/1. Functionally, component of the acetyl coenzyme A carboxylase (ACC) complex. First, biotin carboxylase catalyzes the carboxylation of biotin on its carrier protein (BCCP) and then the CO(2) group is transferred by the carboxyltransferase to acetyl-CoA to form malonyl-CoA. This is Acetyl-coenzyme A carboxylase carboxyl transferase subunit alpha from Rhizobium etli (strain ATCC 51251 / DSM 11541 / JCM 21823 / NBRC 15573 / CFN 42).